Consider the following 594-residue polypeptide: Bifunctional lycopene cyclase/phytoene synthase (594 aa).

Residues Met1 to Asn249 are lycopene beta-cyclase. 7 helical membrane passes run Leu3–Leu23, Lys35–Ile55, Leu77–Phe97, Leu130–Gly150, Met153–Met173, Phe176–Leu196, and Ile227–Met247. The segment at Tyr256–Leu594 is phytoene synthase.

It in the N-terminal section; belongs to the lycopene beta-cyclase family. The protein in the C-terminal section; belongs to the phytoene/squalene synthase family.

The protein resides in the membrane. The catalysed reaction is all-trans-lycopene = gamma-carotene. It catalyses the reaction gamma-carotene = all-trans-beta-carotene. The enzyme catalyses 2 (2E,6E,10E)-geranylgeranyl diphosphate = 15-cis-phytoene + 2 diphosphate. It functions in the pathway carotenoid biosynthesis; beta-carotene biosynthesis. It participates in carotenoid biosynthesis; phytoene biosynthesis; all-trans-phytoene from geranylgeranyl diphosphate: step 1/1. Bifunctional enzyme that catalyzes the reactions from geranylgeranyl diphosphate to phytoene (phytoene synthase) and lycopene to beta-carotene via the intermediate gamma-carotene (lycopene cyclase). The chain is Bifunctional lycopene cyclase/phytoene synthase from Arthroderma gypseum (strain ATCC MYA-4604 / CBS 118893) (Microsporum gypseum).